A 210-amino-acid chain; its full sequence is Probable GTP-binding protein EngB (210 aa).

An EngB-type G domain is found at 29-203; it reads NGIEIAFAGR…SNKLDSWFAP (175 aa). GTP is bound by residues 37–44, 64–68, 82–85, 149–152, and 181–184; these read GRSNAGKS, GRTQL, DLPG, TKAD, and IYSA. The Mg(2+) site is built by S44 and T66.

The protein belongs to the TRAFAC class TrmE-Era-EngA-EngB-Septin-like GTPase superfamily. EngB GTPase family. It depends on Mg(2+) as a cofactor.

In terms of biological role, necessary for normal cell division and for the maintenance of normal septation. The sequence is that of Probable GTP-binding protein EngB from Haemophilus ducreyi (strain 35000HP / ATCC 700724).